We begin with the raw amino-acid sequence, 279 residues long: MKLLLLLCISCIPLAYSHDGEPFDYLMFTTIYPTAVCRADDDSVPESCEIPSGTPQWSIHGLWPNFENGSYPQNCRGTPRHFDENLIKSIEDRLVVVWPNLYPKKTIQSFWKHEYDKHGTCAQSEKLFESELAYFTEVMKVFDSIDVAGGLKSVGPSEKPITSSDLKNALSGVTSGKTFQFHCLRDKKTKQFLLGDIRLCLNKDLTIRDCPTDGKHPNRVSRFERSIGRNRRGPPLPSFQPCPAEFIYLPEMSSISKSSDSTSPSIFGRIWSAIKNIGN.

The first 17 residues, 1–17 (MKLLLLLCISCIPLAYS), serve as a signal peptide directing secretion. An intrachain disulfide couples Cys37 to Cys48. His60 is a catalytic residue. Residue Asn68 is glycosylated (N-linked (GlcNAc...) asparagine). Residues Glu114 and His118 contribute to the active site. Residues Cys200 and Cys210 are joined by a disulfide bond.

It belongs to the RNase T2 family. As to expression, expressed in the pharynx, hypodermis, muscle cells, sheath cells, intestinal cells, the vulva and tail regions.

It is found in the lysosome. The catalysed reaction is a ribonucleotidyl-ribonucleotide-RNA + H2O = a 3'-end 3'-phospho-ribonucleotide-RNA + a 5'-end dephospho-ribonucleoside-RNA + H(+). Its function is as follows. Probable endoribonuclease involved in the autophagy-mediated degradation of ribosomal RNA and ribosomal proteins in lysosomes. The polypeptide is Ribonuclease T2 protein rnst-2 (Caenorhabditis elegans).